Here is a 438-residue protein sequence, read N- to C-terminus: GDP-mannose 6-dehydrogenase (438 aa).

NAD(+) is bound by residues tyrosine 10, valine 11, aspartate 30, lysine 35, threonine 86, and threonine 124. Positions 161, 210, 214, 217, 225, 256, 257, 259, 262, and 265 each coordinate GDP-alpha-D-mannuronate. Cysteine 268 is an active-site residue. Residue lysine 271 participates in NAD(+) binding. GDP-alpha-D-mannuronate is bound at residue lysine 324. Arginine 331 contacts NAD(+).

The protein belongs to the UDP-glucose/GDP-mannose dehydrogenase family.

It carries out the reaction GDP-alpha-D-mannose + 2 NAD(+) + H2O = GDP-alpha-D-mannuronate + 2 NADH + 3 H(+). The protein operates within glycan biosynthesis; alginate biosynthesis. Functionally, catalyzes the oxidation of guanosine diphospho-D-mannose (GDP-D-mannose) to GDP-D-mannuronic acid, a precursor for alginate polymerization. The alginate layer causes a mucoid phenotype and provides a protective barrier against host immune defenses and antibiotics. The polypeptide is GDP-mannose 6-dehydrogenase (algD) (Pseudomonas putida (strain ATCC 47054 / DSM 6125 / CFBP 8728 / NCIMB 11950 / KT2440)).